The primary structure comprises 141 residues: ATP synthase epsilon chain (141 aa).

The protein belongs to the ATPase epsilon chain family. In terms of assembly, F-type ATPases have 2 components, CF(1) - the catalytic core - and CF(0) - the membrane proton channel. CF(1) has five subunits: alpha(3), beta(3), gamma(1), delta(1), epsilon(1). CF(0) has three main subunits: a, b and c.

It localises to the cell membrane. Produces ATP from ADP in the presence of a proton gradient across the membrane. The polypeptide is ATP synthase epsilon chain (Lactococcus lactis subsp. cremoris (strain SK11)).